The primary structure comprises 1373 residues: TAL effector protein PthXo1 (1373 aa).

2 disordered regions span residues 1–68 (MDPI…SAGS) and 127–152 (AARP…PAAQ). The span at 131–141 (PRAKPAPRRRA) shows a compositional bias: basic residues. The span at 142 to 152 (AQPSDASPAAQ) shows a compositional bias: low complexity. A Cryptic repeat -1 repeat occupies 221–239 (THEDIVGVGKQWSGARALE). The stretch at 256–273 (DTGQLVKIAKRGGVTAVE) is one Cryptic repeat 0 repeat. 23 Core repeat repeats span residues 289–322 (LTPA…QAHG), 323–356 (LTPA…QAHG), 357–390 (LPPD…QAHG), 391–424 (LTPD…QAHG), 425–458 (LTPD…QAHG), 459–492 (LTPD…QAHG), 493–525 (LTPD…QAHG), 526–559 (LTPD…QTHG), 560–593 (LTPA…QAHG), 594–627 (LTPD…QAHG), 628–661 (LTPD…QAHG), 662–695 (LTPD…QAHG), 696–729 (LTQV…QAHG), 730–763 (LTPA…QAHG), 764–797 (LTPD…QAHG), 798–831 (LTQE…QAHG), 832–865 (LTPD…QAHG), 866–899 (LTPA…QDHG), 900–933 (LTLA…QAHG), 934–967 (LTQD…QDHG), 968–1001 (LTPD…QDHG), 1002–1034 (LTLD…QDHG), and 1035–1068 (LTPD…QDHG). HEAT repeat units lie at residues 714–760 (LETV…VLCQ), 782–828 (LETV…VLCQ), 850–893 (LETV…LLPV), and 918–961 (LETV…LLPV). An HEAT 5 repeat occupies 1053 to 1091 (LETVQRLLPVLCQDHGLTPNQVVAIASNGGKQALESIVA). A Core repeat 23.5 repeat occupies 1069 to 1087 (LTPNQVVAIASNGGKQALE). An acidic activation domain region spans residues 1136-1364 (RVNRRIGERT…ELAWLMELLP (229 aa)). The Nuclear localization signal NLS1 motif lies at 1222–1225 (KRAK). Residues 1250–1286 (LDAPSPMHEGDQTGASSRKRSRSDRAVTGPSAQHSFE) are disordered. A Nuclear localization signal NLS2 motif is present at residues 1268–1271 (KRSR). The Nuclear localization signal NLS3 motif lies at 1305 to 1308 (KRPR).

This sequence belongs to the transcription activator-like effector (TALE) family.

The protein resides in the secreted. The protein localises to the host nucleus. Avirulence protein. Acts as a transcription factor in rice, inducing expression of a number of host genes including SWEET11 (Os8N3, XA13, AC Q6YZF3) in susceptible plants with the Xa13 allele. Plants with the xa13 allele, which has an altered promoter, are resistant to bacterial blight caused by this bacterial strain and do not induce SWEET11. The xa13 allele elicits an atypical hypersensitive response (HR). PthXo1 binds SWEET11 promoter DNA in a sequence-specific manner. The sequence is that of TAL effector protein PthXo1 (pthXo1) from Xanthomonas oryzae pv. oryzae (strain PXO99A).